Consider the following 567-residue polypeptide: PCNA-interacting partner (567 aa).

The segment at 485-552 (IDLKTAEQVK…GVSRNKASKN (68 aa)) is disordered. 2 stretches are compositionally biased toward polar residues: residues 512–524 (DIQS…QENE) and 534–552 (LTSS…ASKN).

This sequence belongs to the PARI family.

Its subcellular location is the cytoplasm. The protein resides in the nucleus. Required to suppress inappropriate homologous recombination, thereby playing a central role DNA repair and in the maintenance of genomic stability. In Xenopus laevis (African clawed frog), this protein is PCNA-interacting partner (parpbp).